Here is a 314-residue protein sequence, read N- to C-terminus: MSRPRRRGRDINGVLLLDKPQGMSSNDALQKVKRIYNANRAGHTGALDPLATGMLPICLGEATKFSQYLLDSDKRYRVIARLGQRTDTSDADGQIVEERPVTFSAEQLAAALDTFRGDIEQIPSMYSALKYQGKKLYEYARQGIEVPREARPITVYELLFIRHEGNELELEIHCSKGTYIRTIIDDLGEKLGCGAHVIYLRRLAVSKYPVERMVTLEHLRELVEQAEQQDIPAAELLDPLLMPMDSPASDYPVVNLPLTSSVYFKNGNPVRTSGAPLEGLVRVTEGENGKFIGMGEIDDEGRVAPRRLVVEYPA.

Residue H43 coordinates substrate. D48 serves as the catalytic Nucleophile. Substrate is bound by residues Y76, Y179, and L200.

It belongs to the pseudouridine synthase TruB family. Type 1 subfamily.

It catalyses the reaction uridine(55) in tRNA = pseudouridine(55) in tRNA. Functionally, responsible for synthesis of pseudouridine from uracil-55 in the psi GC loop of transfer RNAs. The sequence is that of tRNA pseudouridine synthase B from Escherichia coli O157:H7.